We begin with the raw amino-acid sequence, 182 residues long: MQTEHVILLNAQGVPTGTLEKYAAHTADTLLHLAFSSWLFNAKGQLLVTRRALSKKAWPGVWTNSVCGHPQLGESNEEAVIRRCRYELGVEITPPESIYPDFRYRATDPNGIVENEVCPVFAARTTSALQINDDEVMDYQWCDLADVLRGIDATPWAFSPWMVMQATNREARKRLSAFTQLK.

Mn(2+)-binding residues include H25 and H32. The Nudix hydrolase domain occupies L30 to M164. C67 is an active-site residue. C67 is a Mg(2+) binding site. Residue H69 coordinates Mn(2+). E87 lines the Mg(2+) pocket. Mn(2+) contacts are provided by E114 and E116. E116 is a catalytic residue.

Belongs to the IPP isomerase type 1 family. As to quaternary structure, homodimer. Mg(2+) serves as cofactor. Requires Mn(2+) as cofactor.

The protein localises to the cytoplasm. It catalyses the reaction isopentenyl diphosphate = dimethylallyl diphosphate. It participates in isoprenoid biosynthesis; dimethylallyl diphosphate biosynthesis; dimethylallyl diphosphate from isopentenyl diphosphate: step 1/1. Catalyzes the 1,3-allylic rearrangement of the homoallylic substrate isopentenyl (IPP) to its highly electrophilic allylic isomer, dimethylallyl diphosphate (DMAPP). The chain is Isopentenyl-diphosphate Delta-isomerase from Escherichia coli O6:H1 (strain CFT073 / ATCC 700928 / UPEC).